The sequence spans 249 residues: MYPIQVIAEDPERTAQAAELATRLQQQMAESPFALVWGEQHLELRKLDEPKLGPVFVDFVEGAVAHRRKFGGGRGQSIAKAVGLKAGANPTVVDATAGLGRDAFVLASLGCQVTMLERHPVVAALLADGLQRAQQDSEIGGWMRERMSLRSGPALENLQQLGFTPDVVYLDPMFPHRQKSALVKKEMRVFQSLVGADLDADALLPAALAVAGKRVVVKRPDYAGYLNEMKPGMSIETKSNRFDVYVISR.

Residues 101–102 (RD), 117–118 (ER), and D171 contribute to the S-adenosyl-L-methionine site.

Belongs to the methyltransferase superfamily. RsmJ family.

The protein localises to the cytoplasm. It catalyses the reaction guanosine(1516) in 16S rRNA + S-adenosyl-L-methionine = N(2)-methylguanosine(1516) in 16S rRNA + S-adenosyl-L-homocysteine + H(+). In terms of biological role, specifically methylates the guanosine in position 1516 of 16S rRNA. In Tolumonas auensis (strain DSM 9187 / NBRC 110442 / TA 4), this protein is Ribosomal RNA small subunit methyltransferase J.